We begin with the raw amino-acid sequence, 433 residues long: 5-methylthioadenosine/S-adenosylhomocysteine deaminase (433 aa).

Zn(2+) is bound by residues His-67 and His-69. Substrate is bound by residues Glu-96, Arg-148, Arg-158, and His-186. His-213 contacts Zn(2+). Substrate contacts are provided by Glu-216 and Asp-301. Residue Asp-301 coordinates Zn(2+).

This sequence belongs to the metallo-dependent hydrolases superfamily. MTA/SAH deaminase family. The cofactor is Zn(2+).

It catalyses the reaction S-adenosyl-L-homocysteine + H2O + H(+) = S-inosyl-L-homocysteine + NH4(+). It carries out the reaction S-methyl-5'-thioadenosine + H2O + H(+) = S-methyl-5'-thioinosine + NH4(+). Catalyzes the deamination of 5-methylthioadenosine and S-adenosyl-L-homocysteine into 5-methylthioinosine and S-inosyl-L-homocysteine, respectively. Is also able to deaminate adenosine. The sequence is that of 5-methylthioadenosine/S-adenosylhomocysteine deaminase from Pelotomaculum thermopropionicum (strain DSM 13744 / JCM 10971 / SI).